Reading from the N-terminus, the 468-residue chain is Heat stress transcription factor A-1e (468 aa).

A DNA-binding region spans residues 21–115; that stretch reads IPPFLSKTYD…ILKSIVRRKP (95 aa). The segment at 133 to 199 is hydrophobic repeat HR-A/B; it reads ACVEVGKFGL…QMMSFLAKAV (67 aa). Residues 211–220 are compositionally biased toward polar residues; it reads QSNEANQHIS. Disordered stretches follow at residues 211–244 and 268–309; these read QSNEANQHISESNKKRRLPVEDQMNSGSHGVNGL and QMSN…PEVT. Residues 223 to 227 carry the Nuclear localization signal motif; it reads NKKRR. The span at 277–305 shows a compositional bias: low complexity; the sequence is SLSSNNGSFLLGDVPNSNISDNGSSSNGS. Residues 402–411 carry the AHA motif; sequence DSFWEQFIGE. The short motif at 454 to 461 is the Nuclear export signal element; that stretch reads LTEQMGLL.

The protein belongs to the HSF family. Class A subfamily. As to quaternary structure, homotrimer. Post-translationally, exhibits temperature-dependent phosphorylation.

Its subcellular location is the cytoplasm. It localises to the nucleus. Its function is as follows. Transcriptional activator that specifically binds DNA sequence 5'-AGAAnnTTCT-3' known as heat shock promoter elements (HSE). In Arabidopsis thaliana (Mouse-ear cress), this protein is Heat stress transcription factor A-1e (HSFA1E).